Consider the following 356-residue polypeptide: Protein-arginine kinase (356 aa).

The Phosphagen kinase C-terminal domain occupies 24–254 (IVLSSRIRLA…MQLIQQERAA (231 aa)). ATP is bound by residues 27–31 (SSRIR), histidine 91, arginine 125, 176–180 (RASVM), and 207–212 (RGIYGE). The RDXXRA motif of the pArg binding pocket involved in allosteric regulation signature appears at 337–342 (RDERRA).

This sequence belongs to the ATP:guanido phosphotransferase family.

It carries out the reaction L-arginyl-[protein] + ATP = N(omega)-phospho-L-arginyl-[protein] + ADP + H(+). With respect to regulation, appears to be allosterically activated by the binding of pArg-containing polypeptides to the pArg-binding pocket localized in the C-terminal domain of McsB. In terms of biological role, catalyzes the specific phosphorylation of arginine residues in a large number of proteins. Is part of the bacterial stress response system. Protein arginine phosphorylation has a physiologically important role and is involved in the regulation of many critical cellular processes, such as protein homeostasis, motility, competence, and stringent and stress responses, by regulating gene expression and protein activity. This chain is Protein-arginine kinase, found in Halalkalibacterium halodurans (strain ATCC BAA-125 / DSM 18197 / FERM 7344 / JCM 9153 / C-125) (Bacillus halodurans).